Consider the following 104-residue polypeptide: Thioredoxin 1 (104 aa).

The Thioredoxin domain maps to 2–104 (VKIVTSQAEF…LKQLIEKYAA (103 aa)). Active-site nucleophile residues include cysteine 30 and cysteine 33. Cysteine 30 and cysteine 33 are oxidised to a cystine.

Belongs to the thioredoxin family. Post-translationally, the disulfide bond between Cys-30 and Cys-33 acts as a redox-active center and is reduced by thioredoxin reductase TRXR.

The protein resides in the cytoplasm. Its function is as follows. Participates in various redox reactions through the reversible oxidation of its active center dithiol to a disulfide and catalyzes dithiol-disulfide exchange reactions. By modifying the redox status of targeted proteins, induces changes in their structure and activity. Reduces oxidized glutathione (GSSG), thereby acting as a backup for the glutathione redox system. Reduces nitroglutathione (GSNO), a compound involved in the transport of nitric oxide (NO). Also reduces oxidative stress by detoxifying hydrogen peroxide, tert-butyl hydroperoxide and cumene hydroperoxide. Activates ornithine aminotransferase OAT by reducing a disulfide bond in the substrate binding loop, thereby enhancing the affinity of OAT for its substrates. May reduce S-adenosyl-L-homocysteine hydrolase SAHH. This chain is Thioredoxin 1, found in Plasmodium falciparum (isolate 3D7).